Consider the following 283-residue polypeptide: (+)-borneol dehydrogenase 2 (283 aa).

Residues 27–33, D51, 76–77, and 103–105 contribute to the NAD(+) site; these read GGSSGIG, DV, and NAG. The active-site Proton donor is the S157. Residues Y170, K174, and T205 each coordinate NAD(+). The active-site Proton acceptor is Y170. K174 functions as the Proton donor/acceptor in the catalytic mechanism.

This sequence belongs to the short-chain dehydrogenases/reductases (SDR) family.

It catalyses the reaction (1R,2S,4R)-borneol + NAD(+) = (1R,4R)-camphor + NADH + H(+). Involved in the biosynthesis of monoterpene natural products related to camphor. Catalayzes the oxidation of (+)-borneol to (+)-camphor. Shows absolute selectivity towards (+)-borneol. Catalyzes the oxidation of (+)-isoborneol to (-)-camphor. Shows absolute selectivity towards (+)-isoborneol. This Salvia officinalis (Sage) protein is (+)-borneol dehydrogenase 2.